The following is a 400-amino-acid chain: Large envelope protein (400 aa).

At Met1 the chain carries N-acetylmethionine. 2 disordered regions span residues 1–50 (MGGW…PHKD) and 84–116 (ILTSVPAAPPPASTNRQSGRQPTPLSPPLRDTH). The N-myristoyl glycine; by host moiety is linked to residue Gly2. Positions 2 to 119 (GGWSSKPRKG…PPLRDTHPQA (118 aa)) are pre-S1. Positions 2–174 (GGWSSKPRKG…LSTTGDPVPN (173 aa)) are pre-S. Over 2–181 (GGWSSKPRKG…VPNMENIASG (180 aa)) the chain is Virion surface; in external conformation. The Intravirion; in internal conformation portion of the chain corresponds to 2 to 253 (GGWSSKPRKG…PGYRWMYLRR (252 aa)). N-linked (GlcNAc...) asparagine glycosylation occurs at Trp4. A compositionally biased stretch (polar residues) spans 96–106 (STNRQSGRQPT). Positions 120 to 174 (MQWNSTTFHQTLQDPRVRALYLPAGGSSSGTVSPAQNTVSAISSILSTTGDPVPN) are pre-S2. The chain crosses the membrane as a helical span at residues 182-202 (LLGPLLVLQAGFFSLTKILTI). Topologically, residues 203-253 (PQSLDSWWTSLSFLGGTPVCLGQNSQSPISSHSPTCCPPICPGYRWMYLRR) are intravirion; in external conformation. A helical transmembrane segment spans residues 254 to 274 (FIIXLCILLLCLIFLLVLLDY). The Virion surface segment spans residues 275–348 (QGMLPVCPLI…WASVRFSWLS (74 aa)). Asn320 carries N-linked (GlcNAc...) asparagine; by host glycosylation. A helical membrane pass occupies residues 349 to 369 (LLVPFVQWFVGLSPTVWLSVI). At 370–375 (WMMWYW) the chain is on the intravirion side. The helical transmembrane segment at 376 to 398 (GPSLYNILSPFMPLLPIFFCLWV) threads the bilayer. Over 399-400 (YI) the chain is Virion surface.

It belongs to the orthohepadnavirus major surface antigen family. Interacts (via its myristoylated pre-S1 region) with the host SLC10A1/NTCP; this interaction is essential for viral entry. In terms of assembly, in its internal form (Li-HBsAg), interacts with the capsid protein and with the isoform S. Interacts with host chaperone CANX. As to quaternary structure, associates with host chaperone CANX through its pre-S2 N glycan; this association may be essential for isoform M proper secretion. Interacts with isoform L. Interacts with the antigens of satellite virus HDV (HDVAgs); this interaction is required for encapsidation of HDV genomic RNA. Isoform M is N-terminally acetylated by host at a ratio of 90%, and N-glycosylated by host at the pre-S2 region. Post-translationally, myristoylated; this modification is essential for its interaction with the host protein SLC10A1/NTCP.

It localises to the virion membrane. The large envelope protein exists in two topological conformations, one which is termed 'external' or Le-HBsAg and the other 'internal' or Li-HBsAg. In its external conformation the protein attaches the virus to cell receptors and thereby initiating infection. This interaction determines the species specificity and liver tropism. This attachment induces virion internalization predominantly through caveolin-mediated endocytosis. The large envelope protein also assures fusion between virion membrane and endosomal membrane. In its internal conformation the protein plays a role in virion morphogenesis and mediates the contact with the nucleocapsid like a matrix protein. Its function is as follows. The middle envelope protein plays an important role in the budding of the virion. It is involved in the induction of budding in a nucleocapsid independent way. In this process the majority of envelope proteins bud to form subviral lipoprotein particles of 22 nm of diameter that do not contain a nucleocapsid. This Hepatitis B virus genotype B1 (isolate Japan/Ry30/2002) (HBV-B) protein is Large envelope protein.